Here is a 175-residue protein sequence, read N- to C-terminus: MALNLRINRQIRAPRVRVIGSAGEQLGILSIKEALDLAKEANLDLVEVASNSEPPVCKIMDYGKYRYDVTKKEKDSKKAQHQVRIKEVKLKPNIDDNDFLTKAKQARAFIEKGNKVKVSCMFRGRELAYPEHGYKVIQRMCQGLEDIGFVESEPKLNGRSLICVIAPGTLKTKKK.

This sequence belongs to the IF-3 family. In terms of assembly, monomer.

It localises to the cytoplasm. Its function is as follows. IF-3 binds to the 30S ribosomal subunit and shifts the equilibrium between 70S ribosomes and their 50S and 30S subunits in favor of the free subunits, thus enhancing the availability of 30S subunits on which protein synthesis initiation begins. The protein is Translation initiation factor IF-3 of Chlamydia trachomatis serovar D (strain ATCC VR-885 / DSM 19411 / UW-3/Cx).